We begin with the raw amino-acid sequence, 115 residues long: Large ribosomal subunit protein bL20c (115 aa).

Belongs to the bacterial ribosomal protein bL20 family.

The protein localises to the plastid. It is found in the chloroplast. Its function is as follows. Binds directly to 23S ribosomal RNA and is necessary for the in vitro assembly process of the 50S ribosomal subunit. It is not involved in the protein synthesizing functions of that subunit. The polypeptide is Large ribosomal subunit protein bL20c (Angiopteris evecta (Mule's foot fern)).